We begin with the raw amino-acid sequence, 187 residues long: Early nodulin-55-2 (187 aa).

An N-terminal signal peptide occupies residues 1–26 (MASCLPNASPFLVMLAMCLLISTSEA). Residues 27–132 (EKYVVGGSEK…GLKLAVLVIS (106 aa)) form the Phytocyanin domain. Asn-78, Asn-116, and Asn-134 each carry an N-linked (GlcNAc...) asparagine glycan. The cysteines at positions 85 and 120 are disulfide-linked. The interval 138 to 167 (KNLLSPSPSPSPPPSSLLSPSPSPLPNNQG) is disordered. Positions 144–162 (SPSPSPPPSSLLSPSPSPL) are enriched in pro residues.

Belongs to the early nodulin-like (ENODL) family.

Its subcellular location is the symbiosome. The protein localises to the peribacteroid membrane. In terms of biological role, may act as a carbohydrate transporter. The protein is Early nodulin-55-2 of Glycine max (Soybean).